We begin with the raw amino-acid sequence, 662 residues long: MINHITDNQFKLVSKYQPSGDQPQAIEQLVDNIEGGEKAQILMGATGTGKTYTMSQVISKVNKPTLVIAHNKTLAGQLYGEFKEFFPENAVEYFVSYYDYYQPEAYVPSSDTYIEKDSSVNDEIDKLRHSATSALLERNDVIVVASVSCIYGLGSPKEYADSVVSLRPGLEISRDKLLNDLVDIQFERNDIDFQRGRFRVRGDVVEIFPASRDEHAFRVEFFGDEIDRIREVEALTGQVLGEVDHLAIFPATHFVTNDDHMEVAIAKIQAELEEQLAVFEKEGKLLEAQRLKQRTEYDIEMLREMGYTNGVENYSRHMDGRSEGEPPYTLLDFFPDDFLIMIDESHMTMGQIKGMYNGDRSRKEMLVNYGFRLPSALDNRPLRREEFESHVHQIVYVSATPGDYENEQTETVIEQIIRPTGLLDPEVEVRPTMGQIDDLLGEINARVEKNERTFITTLTKKMAEDLTDYFKEMGIKVKYMHSDIKTLERTEIIRDLRLGVFDVLVGINLLREGIDVPEVSLVAILDADKEGFLRNERGLIQTIGRAARNSEGHVIMYADTVTQSMQRAIDETARRRKIQMAYNEEHGIVPQTIKKEIRDLIAVTKAVAKEEDKEVDINSLNKQERKELVKKLEKQMQEAVEVLDFELAAQIRDMMLEVKALD.

The region spanning 31 to 188 (DNIEGGEKAQ…NDLVDIQFER (158 aa)) is the Helicase ATP-binding domain. 44–51 (GATGTGKT) contacts ATP. The Beta-hairpin motif lies at 97–120 (YYDYYQPEAYVPSSDTYIEKDSSV). In terms of domain architecture, Helicase C-terminal spans 435-601 (QIDDLLGEIN…TIKKEIRDLI (167 aa)). The 36-residue stretch at 626-661 (KELVKKLEKQMQEAVEVLDFELAAQIRDMMLEVKAL) folds into the UVR domain.

This sequence belongs to the UvrB family. In terms of assembly, forms a heterotetramer with UvrA during the search for lesions. Interacts with UvrC in an incision complex.

Its subcellular location is the cytoplasm. Functionally, the UvrABC repair system catalyzes the recognition and processing of DNA lesions. A damage recognition complex composed of 2 UvrA and 2 UvrB subunits scans DNA for abnormalities. Upon binding of the UvrA(2)B(2) complex to a putative damaged site, the DNA wraps around one UvrB monomer. DNA wrap is dependent on ATP binding by UvrB and probably causes local melting of the DNA helix, facilitating insertion of UvrB beta-hairpin between the DNA strands. Then UvrB probes one DNA strand for the presence of a lesion. If a lesion is found the UvrA subunits dissociate and the UvrB-DNA preincision complex is formed. This complex is subsequently bound by UvrC and the second UvrB is released. If no lesion is found, the DNA wraps around the other UvrB subunit that will check the other stand for damage. This chain is UvrABC system protein B, found in Streptococcus pneumoniae serotype 2 (strain D39 / NCTC 7466).